We begin with the raw amino-acid sequence, 229 residues long: MTKKKAFTPLLYLASIVFLPWWISLSLNKSLESWVTNWWNTRQSETFLNDIQEKSILEKFIELEELFLLDEMIKECPETHLQKLRMGIHKETIQLIKMYNEDPIHTILHFSTNIICFVILSGYSILGNEELLILNSWIQQFLYNLSDTIKAFSILLLTDLCIGFHSPHGWELMIGSVYKDFGFAHNDQIISGLVSTFPVILDTILKYWIFRYLNRVSPSLVVIYHSMND.

A run of 4 helical transmembrane segments spans residues 7–27, 114–134, 154–174, and 189–209; these read FTPL…SLSL, IICF…LLIL, ILLL…ELMI, and IISG…KYWI.

Belongs to the CemA family.

It localises to the plastid. Its subcellular location is the chloroplast inner membrane. It carries out the reaction K(+)(in) + H(+)(out) = K(+)(out) + H(+)(in). Its function is as follows. Contributes to K(+)/H(+) antiport activity by supporting proton efflux to control proton extrusion and homeostasis in chloroplasts in a light-dependent manner to modulate photosynthesis. Prevents excessive induction of non-photochemical quenching (NPQ) under continuous-light conditions. Indirectly promotes efficient inorganic carbon uptake into chloroplasts. This chain is Potassium/proton antiporter CemA, found in Vitis vinifera (Grape).